The following is a 149-amino-acid chain: Calmodulin (149 aa).

EF-hand domains lie at 8–43 (EQIA…LGQN), 44–79 (PTEA…KMAD), 81–116 (DTEE…LGEK), and 117–149 (LSDE…MLSK). Residues Asp21, Asp23, Asp25, Asn27, Glu32, Asp57, Asp59, Asn61, Thr63, Glu68, Asp94, Asp96, Asn98, and Glu105 each coordinate Ca(2+). N6,N6,N6-trimethyllysine is present on Lys116. The Ca(2+) site is built by Asp130, Asp132, Asp134, Gln136, and Glu141.

The protein belongs to the calmodulin family.

Functionally, calmodulin mediates the control of a large number of enzymes, ion channels and other proteins by Ca(2+). Among the enzymes to be stimulated by the calmodulin-Ca(2+) complex are a number of protein kinases and phosphatases. This Physarum polycephalum (Slime mold) protein is Calmodulin.